A 465-amino-acid polypeptide reads, in one-letter code: MLPSTIQTLTLFLTSGGVLLSLYVSASLSYLLYSDILLRFSSKITAPTMTLDCANASNVQAVNRSATKEMTFLLPEPEWTYPRLSCQGSTFQKALLISPHRFGEARGNSAPLIIREPFIACGPKECKHFALTHYAAQPGGYYNGTREDRNKLRHLISVKLGKIPTVENSIFHMAAWSGSACHDGREWTYIGVDGPDSNALIKIKYGEAYTDTYHSYANNILRTQESACNCIGGDCYLMITDGSASGISECRFLKIREGRIIKEIFPTGRVEHTEECTCGFASNKTIECACRDNSYTAKRPFVKLNVETDTAEIRLMCTETYLDTPRPDDGSITGPCESDGDKGRGGIKGGFVHQRMASKIGRWYSRTMSKTERMGMELYVKYDGDPWTDSDALAPSGVMVSMKEPGWYSFGFEIKDKKCDVPCIGIEMVHDGGKKTWHSAATAIYCLMGSGQLLWDTVTGVDMAL.

At 1-11 (MLPSTIQTLTL) the chain is on the intravirion side. A helical membrane pass occupies residues 12–34 (FLTSGGVLLSLYVSASLSYLLYS). Residues 13 to 35 (LTSGGVLLSLYVSASLSYLLYSD) form an involved in apical transport and lipid raft association region. Over 35–465 (DILLRFSSKI…DTVTGVDMAL (431 aa)) the chain is Virion surface. The segment at 38–85 (LRFSSKITAPTMTLDCANASNVQAVNRSATKEMTFLLPEPEWTYPRLS) is hypervariable stalk region. N-linked (GlcNAc...) asparagine; by host glycosylation is found at N55 and N63. Disulfide bonds link C86/C419, C121/C126, C181/C228, C230/C235, C276/C290, C278/C288, C317/C336, and C423/C446. Positions 88–465 (GSTFQKALLI…DTVTGVDMAL (378 aa)) are head of neuraminidase. Residue R115 coordinates substrate. N143 carries N-linked (GlcNAc...) asparagine; by host glycosylation. D148 (proton donor/acceptor) is an active-site residue. R149 lines the substrate pocket. Position 274-275 (274-275 (EE)) interacts with substrate. N-linked (GlcNAc...) asparagine; by host glycosylation is present at N283. Position 291 (R291) interacts with substrate. Ca(2+)-binding residues include D292 and D323. Residues 328 to 347 (DDGSITGPCESDGDKGRGGI) are disordered. R373 is a binding site for substrate. The active-site Nucleophile is the Y408.

Belongs to the glycosyl hydrolase 34 family. As to quaternary structure, homotetramer. The cofactor is Ca(2+). Post-translationally, N-glycosylated.

Its subcellular location is the virion membrane. The protein localises to the host apical cell membrane. It carries out the reaction Hydrolysis of alpha-(2-&gt;3)-, alpha-(2-&gt;6)-, alpha-(2-&gt;8)- glycosidic linkages of terminal sialic acid residues in oligosaccharides, glycoproteins, glycolipids, colominic acid and synthetic substrates.. Inhibited by the neuraminidase inhibitors zanamivir (Relenza) and oseltamivir (Tamiflu). These drugs interfere with the release of progeny virus from infected cells and are effective against all influenza strains. Resistance to neuraminidase inhibitors is quite rare. In terms of biological role, catalyzes the removal of terminal sialic acid residues from viral and cellular glycoconjugates. Cleaves off the terminal sialic acids on the glycosylated HA during virus budding to facilitate virus release. Additionally helps virus spread through the circulation by further removing sialic acids from the cell surface. These cleavages prevent self-aggregation and ensure the efficient spread of the progeny virus from cell to cell. Otherwise, infection would be limited to one round of replication. Described as a receptor-destroying enzyme because it cleaves a terminal sialic acid from the cellular receptors. May facilitate viral invasion of the upper airways by cleaving the sialic acid moieties on the mucin of the airway epithelial cells. Likely to plays a role in the budding process through its association with lipid rafts during intracellular transport. May additionally display a raft-association independent effect on budding. Plays a role in the determination of host range restriction on replication and virulence. Sialidase activity in late endosome/lysosome traffic seems to enhance virus replication. The chain is Neuraminidase from Influenza B virus (strain B/Memphis/3/1989).